Consider the following 287-residue polypeptide: ATP synthase gamma chain (287 aa).

The protein belongs to the ATPase gamma chain family. F-type ATPases have 2 components, CF(1) - the catalytic core - and CF(0) - the membrane proton channel. CF(1) has five subunits: alpha(3), beta(3), gamma(1), delta(1), epsilon(1). CF(0) has three main subunits: a, b and c.

It is found in the cell membrane. Its function is as follows. Produces ATP from ADP in the presence of a proton gradient across the membrane. The gamma chain is believed to be important in regulating ATPase activity and the flow of protons through the CF(0) complex. The protein is ATP synthase gamma chain of Wolbachia sp. subsp. Drosophila simulans (strain wRi).